The chain runs to 498 residues: Cytochrome P450 6B1 (498 aa).

Cysteine 443 contributes to the heme binding site.

Belongs to the cytochrome P450 family. Requires heme as cofactor. Midgut microsome.

The protein resides in the endoplasmic reticulum membrane. Its subcellular location is the microsome membrane. The enzyme catalyses an organic molecule + reduced [NADPH--hemoprotein reductase] + O2 = an alcohol + oxidized [NADPH--hemoprotein reductase] + H2O + H(+). In terms of biological role, enables the insect to feed on furanocoumarin-producing plants and evolved as an adaptation for detoxification of xanthotoxin and other furanocoumarins. In Papilio polyxenes (Black swallowtail butterfly), this protein is Cytochrome P450 6B1 (CYP6B1).